The primary structure comprises 149 residues: MDKMNPAHLLVLAAVCVSLLGASSIPPQALNLNQFRLMIKCTNDRVWADFVDYGCYCVARDSNTPVDDLDRCCQAQKQCYDEAVKVHGCKPLVMFYSFECRYLASDLDCSGNNTKCRNFVCNCDRTATLCILTATYNRNNHKIDPSRCQ.

Positions 1 to 30 (MDKMNPAHLLVLAAVCVSLLGASSIPPQAL) are cleaved as a signal peptide. 7 disulfides stabilise this stretch: cysteine 41-cysteine 100, cysteine 55-cysteine 148, cysteine 57-cysteine 73, cysteine 72-cysteine 130, cysteine 79-cysteine 123, cysteine 89-cysteine 116, and cysteine 109-cysteine 121.

It belongs to the phospholipase A2 family. Group I subfamily. K49 sub-subfamily. Heterodimer of an alpha (Kunitz-type) and a beta (phospholipase A2 homolog) chains; non-covalently-linked. In terms of tissue distribution, expressed by the venom gland.

It localises to the secreted. Functionally, heterodimer: MitTx, a heteromeric complex between Kunitz- and phospholipase-A2-like proteins, potently, persistently and selectively activates rat and chicken acid-sensing ion channel ASIC1. Both alternatively spliced rat isoforms ASIC1a and ASIC1b are activated, with a higher potency for ASIC1a (EC(50)=9.4 nM) vs ASIC1b (EC(50)=23 nM). The rat ASIC3 subtype is also sensitive to the heterodimer, but with a lower potency (EC(50)=830 nM). On rat ASIC2a, the toxin shows a very weak activation, but produces a remarkable potentiation (&gt;100-fold) of protons when the extracellular pH drops below neutrality. Moderate and weak activations are also observed on the heterotrimers Asic1a-Asic2a and Asic1a-Asic3 (expressed in CHO cells), respectively. The binding sites of the beta subunit of MitTx and the spider psalmotoxin-1 toxin overlap, explaining why these toxins are mutually exclusive. In vivo, the heterodimer elicits robust pain-related behavior in mice by activation of ASIC1 channels on capsaicin-sensitive nerve fibers. Its function is as follows. Monomer: does not have phospholipase A2 activity but may maintain some lipid-binding character from its PLA2 lineage, which could aid in effecting neuronal depolarization. In Micrurus tener tener (Texas coral snake), this protein is Basic phospholipase A2 homolog MitTx-beta.